We begin with the raw amino-acid sequence, 928 residues long: Neuropilin-1 (928 aa).

A signal peptide spans 1–21; it reads MLLRLLSCCCWLLCSLRSSWA. Residues 22 to 860 are Extracellular-facing; the sequence is SRNDKCGDTI…PGNVLKTLDP (839 aa). 3 cysteine pairs are disulfide-bonded: Cys-27-Cys-54, Cys-82-Cys-104, and Cys-147-Cys-173. CUB domains follow at residues 27-141 and 147-265; these read CGDT…YEVF and CSRN…FSVV. Residue Asn-150 is glycosylated (N-linked (GlcNAc...) asparagine). The Ca(2+) site is built by Glu-195, Asp-209, and Asp-250. Cys-206 and Cys-228 are joined by a disulfide. 3 N-linked (GlcNAc...) asparagine glycosylation sites follow: Asn-261, Asn-300, and Asn-523. 2 cysteine pairs are disulfide-bonded: Cys-275–Cys-424 and Cys-431–Cys-584. F5/8 type C domains are found at residues 275 to 424 and 431 to 584; these read CKEA…LYGC and CSRM…LLGC. O-linked (Xyl...) (chondroitin sulfate) serine; alternate glycosylation is present at Ser-613. A glycan (O-linked (Xyl...) (heparan sulfate) serine; alternate) is linked at Ser-613. A disordered region spans residues 624 to 645; the sequence is GATGQSTETPTVEASPEEPDMT. The span at 625-635 shows a compositional bias: polar residues; that stretch reads ATGQSTETPTV. Residues 646–812 form the MAM domain; sequence HSDLDCKFGW…NHISPSQCRA (167 aa). O-linked (Xyl...) (chondroitin sulfate) serine glycosylation occurs at Ser-834. Asn-844 carries N-linked (GlcNAc...) asparagine glycosylation. The helical transmembrane segment at 861–883 threads the bilayer; sequence ILITIIAMSALGVLLGAICGVVL. The Cytoplasmic portion of the chain corresponds to 884 to 928; it reads YCACWHNGMSERNLSALENYNFELVDGVKLKKDKLNTQNSYSEAS.

This sequence belongs to the neuropilin family. Homodimer, and heterodimer. Retinal ganglion cells and visual center neurons.

The protein resides in the mitochondrion membrane. It localises to the cell membrane. Receptor involved in the development of the cardiovascular system, in angiogenesis, in the formation of certain neuronal circuits and in organogenesis outside the nervous system. Mediates the chemorepulsant activity of semaphorins. Binding to VEGFA initiates a signaling pathway needed for motor neuron axon guidance and cell body migration, including for the caudal migration of facial motor neurons from rhombomere 4 to rhombomere 6 during embryonic development. Regulates mitochondrial iron transport via interaction. This is Neuropilin-1 (nrp1) from Xenopus laevis (African clawed frog).